The chain runs to 437 residues: Chaperone SurA (437 aa).

The first 22 residues, M1–A22, serve as a signal peptide directing secretion. PpiC domains lie at T173–D274 and V283–E383.

Its subcellular location is the periplasm. The catalysed reaction is [protein]-peptidylproline (omega=180) = [protein]-peptidylproline (omega=0). Its function is as follows. Chaperone involved in the correct folding and assembly of outer membrane proteins. Recognizes specific patterns of aromatic residues and the orientation of their side chains, which are found more frequently in integral outer membrane proteins. May act in both early periplasmic and late outer membrane-associated steps of protein maturation. In Aliivibrio fischeri (strain ATCC 700601 / ES114) (Vibrio fischeri), this protein is Chaperone SurA.